We begin with the raw amino-acid sequence, 211 residues long: Molybdenum cofactor guanylyltransferase (211 aa).

GTP contacts are provided by residues 12 to 14, Lys-25, Asn-55, Asp-73, and Asp-103; that span reads LAG. Residue Asp-103 participates in Mg(2+) binding.

This sequence belongs to the MobA family. Monomer. It depends on Mg(2+) as a cofactor.

Its subcellular location is the cytoplasm. The catalysed reaction is Mo-molybdopterin + GTP + H(+) = Mo-molybdopterin guanine dinucleotide + diphosphate. Functionally, transfers a GMP moiety from GTP to Mo-molybdopterin (Mo-MPT) cofactor (Moco or molybdenum cofactor) to form Mo-molybdopterin guanine dinucleotide (Mo-MGD) cofactor. This Albidiferax ferrireducens (strain ATCC BAA-621 / DSM 15236 / T118) (Rhodoferax ferrireducens) protein is Molybdenum cofactor guanylyltransferase.